Here is a 306-residue protein sequence, read N- to C-terminus: Ribonuclease Z (306 aa).

Residues histidine 61, histidine 63, aspartate 65, histidine 66, histidine 137, aspartate 207, and histidine 263 each contribute to the Zn(2+) site. Aspartate 65 functions as the Proton acceptor in the catalytic mechanism.

It belongs to the RNase Z family. In terms of assembly, homodimer. Zn(2+) is required as a cofactor.

The enzyme catalyses Endonucleolytic cleavage of RNA, removing extra 3' nucleotides from tRNA precursor, generating 3' termini of tRNAs. A 3'-hydroxy group is left at the tRNA terminus and a 5'-phosphoryl group is left at the trailer molecule.. Functionally, zinc phosphodiesterase, which displays some tRNA 3'-processing endonuclease activity. Probably involved in tRNA maturation, by removing a 3'-trailer from precursor tRNA. This Thermococcus sibiricus (strain DSM 12597 / MM 739) protein is Ribonuclease Z.